A 131-amino-acid polypeptide reads, in one-letter code: Cytochrome c-552 (131 aa).

4 residues coordinate heme c: cysteine 11, cysteine 14, histidine 15, and methionine 69.

Post-translationally, binds 1 heme c group covalently per subunit.

Functionally, this monoheme basic protein appears to function as an electron donor to cytochrome oxidase in T.thermophilus. This is Cytochrome c-552 (cycA) from Thermus thermophilus.